The chain runs to 704 residues: Elongation factor G (704 aa).

The region spanning 8 to 290 (ARYRNIGISA…AVIDYLPSPV (283 aa)) is the tr-type G domain. GTP contacts are provided by residues 17 to 24 (AHIDAGKT), 88 to 92 (DTPGH), and 142 to 145 (NKMD). K504 and K643 each carry N6-acetyllysine.

It belongs to the TRAFAC class translation factor GTPase superfamily. Classic translation factor GTPase family. EF-G/EF-2 subfamily.

It localises to the cytoplasm. Functionally, catalyzes the GTP-dependent ribosomal translocation step during translation elongation. During this step, the ribosome changes from the pre-translocational (PRE) to the post-translocational (POST) state as the newly formed A-site-bound peptidyl-tRNA and P-site-bound deacylated tRNA move to the P and E sites, respectively. Catalyzes the coordinated movement of the two tRNA molecules, the mRNA and conformational changes in the ribosome. The sequence is that of Elongation factor G from Shigella sonnei (strain Ss046).